Here is a 310-residue protein sequence, read N- to C-terminus: Putative methyltransferase mtx subunit H (310 aa).

The protein belongs to the MtrH family. As to quaternary structure, may be part of a complex composed of 3 subunits; MtxA, MtxH and MtxX.

This chain is Putative methyltransferase mtx subunit H (mtxH), found in Methanosarcina acetivorans (strain ATCC 35395 / DSM 2834 / JCM 12185 / C2A).